The primary structure comprises 354 residues: Rhodopsin (354 aa).

Residues 1–36 (MNGTEGPYFYIPMVNTTGIVRSPYEYPQYYLVNPAA) are Extracellular-facing. Residues asparagine 2 and asparagine 15 are each glycosylated (N-linked (GlcNAc...) asparagine). A helical membrane pass occupies residues 37–61 (YAALGAYMFFLILLGFPINFLTLYV). At 62–73 (TLEHKKLRTPLN) the chain is on the cytoplasmic side. A helical membrane pass occupies residues 74 to 96 (YILLNLAVADLFMVFGGFTTTMY). Topologically, residues 97–110 (TSMHGYFVLGRLGC) are extracellular. The cysteines at positions 110 and 187 are disulfide-linked. A helical transmembrane segment spans residues 111 to 133 (NLEGFFATLGGEIGLWSLVVLAI). The 'Ionic lock' involved in activated form stabilization signature appears at 134–136 (ERW). Residues 134-152 (ERWVVVCKPISNFRFGENH) are Cytoplasmic-facing. Residues 153 to 173 (AIMGLAFTWIMACACAVPPLV) form a helical membrane-spanning segment. The Extracellular segment spans residues 174-202 (GWSRYIPEGMQCSCGVDYYTRAEGFNNES). A glycan (N-linked (GlcNAc...) asparagine) is linked at asparagine 200. A helical membrane pass occupies residues 203 to 224 (FVVYMFTCHFCIPLTIIGFCYG). The Cytoplasmic segment spans residues 225–252 (RLLCAVKEAAAAQQESETTQRAEREVTR). A helical transmembrane segment spans residues 253–274 (MVILMVVGFLVCWLPYASVAWY). The Extracellular portion of the chain corresponds to 275–286 (IFSNQGSQFGPL). Residues 287–308 (FMTIPAFFAKSSSVYNPMIYIC) traverse the membrane as a helical segment. The residue at position 296 (lysine 296) is an N6-(retinylidene)lysine. At 309–354 (MNKQFRHCMITTLCCGKNPFEEEEGASTTASKTEASSVSSSSVSPA) the chain is on the cytoplasmic side. S-palmitoyl cysteine attachment occurs at residues cysteine 322 and cysteine 323. The interval 333–354 (GASTTASKTEASSVSSSSVSPA) is disordered. Low complexity predominate over residues 334-354 (ASTTASKTEASSVSSSSVSPA).

It belongs to the G-protein coupled receptor 1 family. Opsin subfamily. In terms of processing, phosphorylated on some or all of the serine and threonine residues present in the C-terminal region. Post-translationally, contains one covalently linked retinal chromophore.

It localises to the membrane. The protein localises to the cell projection. Its subcellular location is the cilium. The protein resides in the photoreceptor outer segment. Functionally, photoreceptor required for image-forming vision at low light intensity. While most salt water fish species use retinal as chromophore, most freshwater fish use 3-dehydroretinal, or a mixture of retinal and 3-dehydroretinal. Light-induced isomerization of 11-cis to all-trans retinal triggers a conformational change that activates signaling via G-proteins. Subsequent receptor phosphorylation mediates displacement of the bound G-protein alpha subunit by arrestin and terminates signaling. The protein is Rhodopsin (rho) of Salaria pavo (Peacock blenny).